The chain runs to 539 residues: CTP synthase (539 aa).

The interval 1 to 269 (MSATKYIFVT…DERVLSKLKL (269 aa)) is amidoligase domain. Ser15 contacts CTP. Residue Ser15 coordinates UTP. 16–21 (SLGKGI) contacts ATP. Tyr56 lines the L-glutamine pocket. Position 73 (Asp73) interacts with ATP. Positions 73 and 143 each coordinate Mg(2+). Residues 150–152 (DIE), 190–195 (KTKPTQ), and Lys226 each bind CTP. Residues 190–195 (KTKPTQ) and Lys226 each bind UTP. The Glutamine amidotransferase type-1 domain occupies 295 to 537 (NIALVGKYVE…VKAANDFAKG (243 aa)). Gly357 contacts L-glutamine. The active-site Nucleophile; for glutamine hydrolysis is Cys384. Residues 385 to 388 (LGMQ), Glu408, and Arg465 contribute to the L-glutamine site. Catalysis depends on residues His510 and Glu512.

This sequence belongs to the CTP synthase family. As to quaternary structure, homotetramer.

The catalysed reaction is UTP + L-glutamine + ATP + H2O = CTP + L-glutamate + ADP + phosphate + 2 H(+). It catalyses the reaction L-glutamine + H2O = L-glutamate + NH4(+). It carries out the reaction UTP + NH4(+) + ATP = CTP + ADP + phosphate + 2 H(+). It functions in the pathway pyrimidine metabolism; CTP biosynthesis via de novo pathway; CTP from UDP: step 2/2. With respect to regulation, allosterically activated by GTP, when glutamine is the substrate; GTP has no effect on the reaction when ammonia is the substrate. The allosteric effector GTP functions by stabilizing the protein conformation that binds the tetrahedral intermediate(s) formed during glutamine hydrolysis. Inhibited by the product CTP, via allosteric rather than competitive inhibition. In terms of biological role, catalyzes the ATP-dependent amination of UTP to CTP with either L-glutamine or ammonia as the source of nitrogen. Regulates intracellular CTP levels through interactions with the four ribonucleotide triphosphates. The chain is CTP synthase from Cytophaga hutchinsonii (strain ATCC 33406 / DSM 1761 / CIP 103989 / NBRC 15051 / NCIMB 9469 / D465).